Consider the following 266-residue polypeptide: Glutamate racemase (266 aa).

Substrate is bound by residues 9–10 (DS) and 41–42 (YG). The active-site Proton donor/acceptor is the Cys73. Substrate is bound at residue 74 to 75 (NT). Catalysis depends on Cys183, which acts as the Proton donor/acceptor. Residue 184-185 (TH) participates in substrate binding.

It belongs to the aspartate/glutamate racemases family.

It catalyses the reaction L-glutamate = D-glutamate. The protein operates within cell wall biogenesis; peptidoglycan biosynthesis. In terms of biological role, provides the (R)-glutamate required for cell wall biosynthesis. The protein is Glutamate racemase of Shewanella woodyi (strain ATCC 51908 / MS32).